Reading from the N-terminus, the 46-residue chain is Photosystem II reaction center protein K (46 aa).

A propeptide spanning residues 1–9 is cleaved from the precursor; sequence MIDALVLVA. The Lumenal segment spans residues 10-19; the sequence is KLPEAYAIFD. The chain crosses the membrane as a helical span at residues 20–39; the sequence is PLVDVLPVIPVLFLALAFVW. At 40–46 the chain is on the cytoplasmic side; the sequence is QAAVGFR.

Belongs to the PsbK family. PSII is composed of 1 copy each of membrane proteins PsbA, PsbB, PsbC, PsbD, PsbE, PsbF, PsbH, PsbI, PsbJ, PsbK, PsbL, PsbM, PsbT, PsbX, PsbY, PsbZ, Psb30/Ycf12, peripheral proteins PsbO, CyanoQ(PsbQ), PsbU, PsbV and a large number of cofactors. It forms dimeric complexes. Part of a photosystem II (PSII) assembly intermediate complex PSII-I; crystallized from a strain deleted of psbJ, it forms monomeric PSII before addition of the oxygen evolving complex. PSII-I includes 3 assembly factors not found in mature PSII (Psb27, Psb28 and Psb34). Requires PSII binds multiple chlorophylls, carotenoids and specific lipids. as cofactor.

The protein localises to the cellular thylakoid membrane. In terms of biological role, one of the components of the core complex of photosystem II (PSII). PSII is a light-driven water:plastoquinone oxidoreductase that uses light energy to abstract electrons from H(2)O, generating O(2) and a proton gradient subsequently used for ATP formation. It consists of a core antenna complex that captures photons, and an electron transfer chain that converts photonic excitation into a charge separation. Required for association of PsbZ and Psb30/Ycf12 with PSII. In Thermosynechococcus vestitus (strain NIES-2133 / IAM M-273 / BP-1), this protein is Photosystem II reaction center protein K.